The following is a 257-amino-acid chain: GTP cyclohydrolase FolE2 (257 aa).

This sequence belongs to the GTP cyclohydrolase IV family.

It carries out the reaction GTP + H2O = 7,8-dihydroneopterin 3'-triphosphate + formate + H(+). It participates in cofactor biosynthesis; 7,8-dihydroneopterin triphosphate biosynthesis; 7,8-dihydroneopterin triphosphate from GTP: step 1/1. In terms of biological role, converts GTP to 7,8-dihydroneopterin triphosphate. The polypeptide is GTP cyclohydrolase FolE2 (Dictyoglomus turgidum (strain DSM 6724 / Z-1310)).